A 699-amino-acid polypeptide reads, in one-letter code: Epithelial sodium channel subunit alpha (699 aa).

The disordered stretch occupies residues 1-71 (MLDHTRAPEL…EPRQPTEEEE (71 aa)). Topologically, residues 1 to 110 (MLDHTRAPEL…CSKHNRMKTA (110 aa)) are cytoplasmic. A helical transmembrane segment spans residues 111-131 (FWAVLWLCTFGMMYWQFALLF). Residues 132 to 589 (EEYFSYPVSL…SQWSLWFGSS (458 aa)) are Extracellular-facing. 10 disulfides stabilise this stretch: C158/C332, C256/C263, C309/C316, C421/C506, C443/C483, C443/C502, C447/C498, C456/C483, C456/C506, and C458/C472. Residues 200-270 (RRRSTRDLRG…SDCFYQTYSS (71 aa)) form a gating release of inhibition by proteolysis (GRIP); protease-sensitive region that is responsible for the proteolytic activation of the channel region. The interval 211 to 244 (LPHPLQRLRTPPPPNPARSARSASSSVRDNNPQV) is disordered. The span at 227 to 238 (ARSARSASSSVR) shows a compositional bias: low complexity. A helical transmembrane segment spans residues 590–610 (VLSVVEMAELIFDLLVITLIM). Topologically, residues 611–699 (LLHRFRSRYW…SSACAPAMAL (89 aa)) are cytoplasmic. Residues 637–699 (ASSFPSRFCP…SSACAPAMAL (63 aa)) are disordered. Over residues 656–667 (PQQGTTPPLALT) the composition is skewed to low complexity. A PY motif; recruits WW domain-containing proteins and is thereby required for ubiquitination and inhibition of the channel by NEDD4 and NEDD4L motif is present at residues 669-673 (PPPAY).

Belongs to the amiloride-sensitive sodium channel (TC 1.A.6) family. SCNN1A subfamily. As to quaternary structure, heterotrimer; containing an alpha/SCNN1A, a beta/SCNN1B and a gamma/SCNN1G subunit. Interacts with WWP1 (via WW domains). Interacts with WWP2 (via WW domains); inhibits the channel. Interacts with BPIFA1; the interaction is indirect via SCNN1B and inhibits the proteolytic processing of SCNN1A and SCNN1G and the activation of ENaC. Interacts with the full-length immature form of PCSK9 (pro-PCSK9). Post-translationally, ubiquitinated. Can be ubiquitinated at multiple sites and undergo monoubiquitination and polyubiquitination. Ubiquitination by NEDD4 or NEDD4L inhibits the ENaC channel through endocytosis, intracellular retention and degradation of its individual subunits. ENaC is activated through the proteolytic maturation of its subunits. Furin cleaves the SCNN1A subunit, which results in a stepwise increase in the open probability of the channel due to the release of an inhibitory tract. BPIFA1, which is recruited by the SCNN1B subunit, prevents the proteolytic activation of ENaC. In terms of processing, N-glycosylated. As to expression, expressed in kidney (at protein level). Expressed in lung (at protein level). Expressed in the epididymis (at protein level). In the caput and corpus regions of the epididymis, expressed uniformly on the luminal and basal surfaces of the ducts and in the sperm in the duct lumen. Also expressed in distal colon and, at low levels, in liver.

It is found in the apical cell membrane. Its subcellular location is the cell projection. It localises to the cilium. The protein resides in the cytoplasmic granule. The protein localises to the cytoplasm. It is found in the cytoplasmic vesicle. Its subcellular location is the secretory vesicle. It localises to the acrosome. The protein resides in the flagellum. It carries out the reaction Na(+)(in) = Na(+)(out). Originally identified and characterized by its inhibition by the diuretic drug amiloride. Functionally, this is one of the three pore-forming subunits of the heterotrimeric epithelial sodium channel (ENaC), a critical regulator of sodium balance and fluid homeostasis. ENaC operates in epithelial tissues, where it mediates the electrodiffusion of sodium ions from extracellular fluid through the apical membrane of cells, with water following osmotically. It plays a key role in maintaining sodium homeostasis through electrogenic sodium reabsorption in the kidneys. Additionally, ENaC is essential for airway surface liquid homeostasis, which is crucial for proper mucus clearance. In Mus musculus (Mouse), this protein is Epithelial sodium channel subunit alpha.